Here is a 429-residue protein sequence, read N- to C-terminus: Adenylosuccinate synthetase (429 aa).

GTP-binding positions include 12-18 (GDEGKGK) and 40-42 (GHT). D13 serves as the catalytic Proton acceptor. The Mg(2+) site is built by D13 and G40. Residues 13-16 (DEGK), 38-41 (NAGH), T129, R143, Q223, T238, and R302 contribute to the IMP site. H41 acts as the Proton donor in catalysis. Residue 298 to 304 (TVTGRQR) participates in substrate binding. Residues R304, 330 to 332 (KID), and 412 to 414 (STS) contribute to the GTP site.

The protein belongs to the adenylosuccinate synthetase family. In terms of assembly, homodimer. Mg(2+) serves as cofactor.

It is found in the cytoplasm. It carries out the reaction IMP + L-aspartate + GTP = N(6)-(1,2-dicarboxyethyl)-AMP + GDP + phosphate + 2 H(+). The protein operates within purine metabolism; AMP biosynthesis via de novo pathway; AMP from IMP: step 1/2. Functionally, plays an important role in the de novo pathway of purine nucleotide biosynthesis. Catalyzes the first committed step in the biosynthesis of AMP from IMP. The protein is Adenylosuccinate synthetase of Erythrobacter litoralis (strain HTCC2594).